We begin with the raw amino-acid sequence, 140 residues long: Sex-regulated protein janus-B (140 aa).

A substrate-binding site is contributed by Arg-42. His-69 functions as the Proton acceptor in the catalytic mechanism. 110–112 is a binding site for substrate; that stretch reads CKT.

This sequence belongs to the janus family.

Its function is as follows. JanA and janB regulate somatic sex differentiation. This is Sex-regulated protein janus-B (janB) from Drosophila pseudoobscura pseudoobscura (Fruit fly).